The sequence spans 698 residues: Serotransferrin (698 aa).

A signal peptide spans 1-19; it reads MRLAVGALLVCAVLGLCLA. Transferrin-like domains follow at residues 25-347 and 361-683; these read VRWC…NLRE and VKWC…NLRK. 2 disulfides stabilise this stretch: C28–C67 and C38–C58. At R42 the chain carries Dimethylated arginine. An O-linked (GalNAc...) serine glycan is attached at S51. The Fe(3+) site is built by D82 and Y114. 17 cysteine pairs are disulfide-bonded: C137–C213, C156–C350, C177–C193, C180–C196, C190–C198, C246–C260, C358–C615, C364–C396, C374–C387, C421–C693, C437–C656, C469–C542, C493–C684, C503–C517, C514–C525, C582–C596, and C634–C639. The hydrogencarbonate site is built by T139, R143, A145, and G146. Y207 provides a ligand contact to Fe(3+). H268 contacts Fe(3+). At S389 the chain carries Phosphoserine. Positions 411 and 445 each coordinate Fe(3+). T471, R475, A477, and G478 together coordinate hydrogencarbonate. Y536 lines the Fe(3+) pocket. Residue H604 coordinates Fe(3+). A glycan (N-linked (GlcNAc...) asparagine) is linked at N630. At S685 the chain carries Phosphoserine.

This sequence belongs to the transferrin family. In terms of assembly, monomer. Part of a complex composed of SLC40A1/ferroportin, TF/transferrin and HEPH/hephaestin that transfers iron from cells to transferrin. As to expression, expressed by the liver and secreted in plasma.

Its subcellular location is the secreted. Functionally, transferrins are iron binding transport proteins which can bind two Fe(3+) ions in association with the binding of an anion, usually bicarbonate. It is responsible for the transport of iron from sites of absorption and heme degradation to those of storage and utilization. Serum transferrin may also have a further role in stimulating cell proliferation. This Pan troglodytes (Chimpanzee) protein is Serotransferrin (TF).